Here is a 112-residue protein sequence, read N- to C-terminus: T cell receptor alpha variable 13-1 (112 aa).

The N-terminal stretch at 1–20 (MTSIRAVFIFLWLQLDLVNG) is a signal peptide. The 92-residue stretch at 21–112 (ENVEQHPSTL…DSAVYFCAAS (92 aa)) folds into the Ig-like domain. C42 and C109 are disulfide-bonded. A glycan (N-linked (GlcNAc...) asparagine) is linked at N86.

In terms of assembly, alpha-beta TR is a heterodimer composed of an alpha and beta chain; disulfide-linked. The alpha-beta TR is associated with the transmembrane signaling CD3 coreceptor proteins to form the TR-CD3 (TcR or TCR). The assembly of alpha-beta TR heterodimers with CD3 occurs in the endoplasmic reticulum where a single alpha-beta TR heterodimer associates with one CD3D-CD3E heterodimer, one CD3G-CD3E heterodimer and one CD247 homodimer forming a stable octameric structure. CD3D-CD3E and CD3G-CD3E heterodimers preferentially associate with TR alpha and TR beta chains, respectively. The association of the CD247 homodimer is the last step of TcR assembly in the endoplasmic reticulum and is required for transport to the cell surface.

The protein localises to the cell membrane. Functionally, v region of the variable domain of T cell receptor (TR) alpha chain that participates in the antigen recognition. Alpha-beta T cell receptors are antigen specific receptors which are essential to the immune response and are present on the cell surface of T lymphocytes. Recognize peptide-major histocompatibility (MH) (pMH) complexes that are displayed by antigen presenting cells (APC), a prerequisite for efficient T cell adaptive immunity against pathogens. Binding of alpha-beta TR to pMH complex initiates TR-CD3 clustering on the cell surface and intracellular activation of LCK that phosphorylates the ITAM motifs of CD3G, CD3D, CD3E and CD247 enabling the recruitment of ZAP70. In turn ZAP70 phosphorylates LAT, which recruits numerous signaling molecules to form the LAT signalosome. The LAT signalosome propagates signal branching to three major signaling pathways, the calcium, the mitogen-activated protein kinase (MAPK) kinase and the nuclear factor NF-kappa-B (NF-kB) pathways, leading to the mobilization of transcription factors that are critical for gene expression and essential for T cell growth and differentiation. The T cell repertoire is generated in the thymus, by V-(D)-J rearrangement. This repertoire is then shaped by intrathymic selection events to generate a peripheral T cell pool of self-MH restricted, non-autoaggressive T cells. Post-thymic interaction of alpha-beta TR with the pMH complexes shapes TR structural and functional avidity. This is T cell receptor alpha variable 13-1 from Homo sapiens (Human).